Here is a 552-residue protein sequence, read N- to C-terminus: Ribulokinase (552 aa).

This sequence belongs to the ribulokinase family.

It catalyses the reaction D-ribulose + ATP = D-ribulose 5-phosphate + ADP + H(+). The catalysed reaction is L-ribulose + ATP = L-ribulose 5-phosphate + ADP + H(+). The protein operates within carbohydrate degradation; L-arabinose degradation via L-ribulose; D-xylulose 5-phosphate from L-arabinose (bacterial route): step 2/3. The chain is Ribulokinase from Bacillus licheniformis (strain ATCC 14580 / DSM 13 / JCM 2505 / CCUG 7422 / NBRC 12200 / NCIMB 9375 / NCTC 10341 / NRRL NRS-1264 / Gibson 46).